Consider the following 285-residue polypeptide: HTH-type transcriptional regulator MurR (285 aa).

The HTH rpiR-type domain maps to 1–77 (MLYLTKISNA…MALIGEYSAS (77 aa)). Positions 37–56 (SRQMAKQLGISQSSIVKFAQ) form a DNA-binding region, H-T-H motif. An SIS domain is found at 128 to 268 (IIDVISKAQF…FVGLVQLNDV (141 aa)).

As to quaternary structure, homotetramer.

It participates in amino-sugar metabolism; N-acetylmuramate degradation [regulation]. Represses the expression of the murPQ operon involved in the uptake and degradation of N-acetylmuramic acid (MurNAc). Binds to two adjacent inverted repeats within the operator region. MurNAc 6-phosphate, the substrate of MurQ, is the specific inducer that weakens binding of MurR to the operator. The chain is HTH-type transcriptional regulator MurR from Escherichia coli (strain B / BL21-DE3).